A 251-amino-acid chain; its full sequence is Imidazole glycerol phosphate synthase subunit HisF (251 aa).

Active-site residues include aspartate 11 and aspartate 130.

Belongs to the HisA/HisF family. In terms of assembly, heterodimer of HisH and HisF.

Its subcellular location is the cytoplasm. It catalyses the reaction 5-[(5-phospho-1-deoxy-D-ribulos-1-ylimino)methylamino]-1-(5-phospho-beta-D-ribosyl)imidazole-4-carboxamide + L-glutamine = D-erythro-1-(imidazol-4-yl)glycerol 3-phosphate + 5-amino-1-(5-phospho-beta-D-ribosyl)imidazole-4-carboxamide + L-glutamate + H(+). It functions in the pathway amino-acid biosynthesis; L-histidine biosynthesis; L-histidine from 5-phospho-alpha-D-ribose 1-diphosphate: step 5/9. In terms of biological role, IGPS catalyzes the conversion of PRFAR and glutamine to IGP, AICAR and glutamate. The HisF subunit catalyzes the cyclization activity that produces IGP and AICAR from PRFAR using the ammonia provided by the HisH subunit. The chain is Imidazole glycerol phosphate synthase subunit HisF from Cytophaga hutchinsonii (strain ATCC 33406 / DSM 1761 / CIP 103989 / NBRC 15051 / NCIMB 9469 / D465).